Consider the following 187-residue polypeptide: UPF0232 protein JTY_0004 (187 aa).

2 stretches are compositionally biased toward basic and acidic residues: residues 1 to 17 (MTGS…ERSM) and 24 to 45 (LVRR…DAGR). Disordered stretches follow at residues 1–75 (MTGS…DPQP) and 168–187 (PSWR…DTYG).

This sequence belongs to the UPF0232 family.

The sequence is that of UPF0232 protein JTY_0004 from Mycobacterium bovis (strain BCG / Tokyo 172 / ATCC 35737 / TMC 1019).